Here is a 367-residue protein sequence, read N- to C-terminus: Ribosome-binding ATPase YchF (367 aa).

The OBG-type G domain occupies 2 to 258; it reads LSAGIVGLPN…LKLEQRQYFL (257 aa). 11 to 16 lines the ATP pocket; sequence NVGKST. Residues serine 15 and threonine 35 each coordinate Mg(2+). The TGS domain maps to 281–364; sequence NLWSFFTFGK…KDGDVCNFKF (84 aa).

It belongs to the TRAFAC class OBG-HflX-like GTPase superfamily. OBG GTPase family. YchF/OLA1 subfamily. Requires Mg(2+) as cofactor.

Functionally, ATPase that binds to both the 70S ribosome and the 50S ribosomal subunit in a nucleotide-independent manner. The sequence is that of Ribosome-binding ATPase YchF from Mycoplasma genitalium (strain ATCC 33530 / DSM 19775 / NCTC 10195 / G37) (Mycoplasmoides genitalium).